The following is a 465-amino-acid chain: Clusterin-like protein 1 (465 aa).

The first 20 residues, 1–20 (MKPPILVFIVYLLQLRDCQC), serve as a signal peptide directing secretion. Residues 62-107 (LMERREEEHSKLMRTLKKCREEKQEALKLMNEVQEHLEEEERLCQV) are a coiled coil. Disulfide bonds link Cys105-Cys333, Cys116-Cys325, Cys119-Cys322, Cys124-Cys315, and Cys131-Cys305. 2 N-linked (GlcNAc...) asparagine glycosylation sites follow: Asn196 and Asn257. The tract at residues 280-300 (LSKQDKDSAHGGPSSTTWPVR) is disordered. Residues Asn311, Asn351, Asn412, and Asn430 are each glycosylated (N-linked (GlcNAc...) asparagine).

Belongs to the clusterin family.

Its subcellular location is the secreted. This Bos taurus (Bovine) protein is Clusterin-like protein 1.